Consider the following 341-residue polypeptide: MAPPPGVGPASLRFAAAASWLVVRRRRVEHFPKVVEFLQSLRAAAPGLVCYRHHERLCMSLKAKVVVELILQARPWDQVLNALKHHFPAESRTTKEDRKLLEARENFCLLVKHLSEDPPSSLQELEQDYGESFLVAMEKLLFEYLCQLEKALPPVRAQELQDALSWSQPGSFITSSVALHQYGMDMGWTFPESSTSGSGNLIEPMEESPHQQTRPAFHSPLPKAKLGPHQPASLEHPEHLAGHRFNLAPLGKRKSRSHWTSAKACHKERPTVMLLPFRNMGLPAQDLSNPKSREEPGAASAASVGTEPVCTEEAKTPSRPLGKRALEETPPDSPAASRRTV.

Residue alanine 2 is modified to N-acetylalanine. The short motif at 243–265 (HRFNLAPLGKRKSRSHWTSAKAC) is the TBM element. The short motif at 249–255 (PLGKRKS) is the Nuclear localization signal element. The interval 283-341 (PAQDLSNPKSREEPGAASAASVGTEPVCTEEAKTPSRPLGKRALEETPPDSPAASRRTV) is disordered.

In terms of assembly, monomer. Found in a complex with POT1; TERF1 and TNKS1. Component of the shelterin complex (telosome) composed of TERF1, TERF2, TINF2, TERF2IP, ACD and POT1. Interacts with TERF1.

Its subcellular location is the nucleus. The protein resides in the chromosome. It localises to the telomere. In terms of biological role, component of the shelterin complex (telosome) that is involved in the regulation of telomere length and protection. Shelterin associates with arrays of double-stranded TTAGGG repeats added by telomerase and protects chromosome ends; without its protective activity, telomeres are no longer hidden from the DNA damage surveillance and chromosome ends are inappropriately processed by DNA repair pathways. Plays a role in shelterin complex assembly. This Mus musculus (Mouse) protein is TERF1-interacting nuclear factor 2 (Tinf2).